Here is a 297-residue protein sequence, read N- to C-terminus: MFRPATRILLRAPGVAARGPVSRRLISTAPPDAKSRSWKSTIVRLGLAAGAVYYYNTSSVFAEQPSLSFLSKQSTPDSSDETQLPTIDSIKPRIREERQAESKAVSQPDAQPTQHEALSASEAALKSPQELEDEAGQEAAFNPETGEINWDCPCLGGMAHGPCGEEFKAAFSCFVYSTEEPKGMDCIDKFKGMQECFRRYPDVYGAELEDDDEADAAAATAAGVSEPSEQPASPTVSAPTAEIDASSDSEGKEGRAKDVHAQVKSEVAEKAEQAESDDLVPKAWHDTEGTKAQQTEK.

Residues 1–25 (MFRPATRILLRAPGVAARGPVSRRL) constitute a mitochondrion transit peptide. Residues 26–44 (ISTAPPDAKSRSWKSTIVR) lie on the Mitochondrial matrix side of the membrane. The helical; Signal-anchor for type II membrane protein transmembrane segment at 45–62 (LGLAAGAVYYYNTSSVFA) threads the bilayer. Over 63-297 (EQPSLSFLSK…EGTKAQQTEK (235 aa)) the chain is Mitochondrial intermembrane. Residues 70–86 (LSKQSTPDSSDETQLPT) show a composition bias toward polar residues. The interval 70 to 137 (LSKQSTPDSS…PQELEDEAGQ (68 aa)) is disordered. A compositionally biased stretch (basic and acidic residues) spans 90 to 101 (IKPRIREERQAE). Positions 104-114 (AVSQPDAQPTQ) are enriched in polar residues. Residues 116-125 (EALSASEAAL) show a composition bias toward low complexity. Intrachain disulfides connect C152/C154, C163/C196, and C173/C186. The region spanning 160-204 (HGPCGEEFKAAFSCFVYSTEEPKGMDCIDKFKGMQECFRRYPDVY) is the CHCH domain. 2 consecutive short sequence motifs (cx9C motif) follow at residues 163–173 (CGEEFKAAFSC) and 186–196 (CIDKFKGMQEC). A disordered region spans residues 208-297 (LEDDDEADAA…EGTKAQQTEK (90 aa)). Over residues 227–238 (PSEQPASPTVSA) the composition is skewed to polar residues. Residues 249 to 297 (SEGKEGRAKDVHAQVKSEVAEKAEQAESDDLVPKAWHDTEGTKAQQTEK) show a composition bias toward basic and acidic residues.

Monomer. The cofactor is Cu(2+). Zn(2+) is required as a cofactor.

The protein resides in the mitochondrion inner membrane. In terms of biological role, required for the import and folding of small cysteine-containing proteins (small Tim) in the mitochondrial intermembrane space (IMS). Forms a redox cycle with ERV1 that involves a disulfide relay system. Precursor proteins to be imported into the IMS are translocated in their reduced form into the mitochondria. The oxidized form of MIA40 forms a transient intermolecular disulfide bridge with the reduced precursor protein, resulting in oxidation of the precursor protein that now contains an intramolecular disulfide bond and is able to undergo folding in the IMS. This is Mitochondrial intermembrane space import and assembly protein 40 (mia40) from Aspergillus fumigatus (strain ATCC MYA-4609 / CBS 101355 / FGSC A1100 / Af293) (Neosartorya fumigata).